Consider the following 787-residue polypeptide: MKAVETRILELRAELDEHNYRYHVLDEPSIPDVEYDRLFHELKALEAENPHLVTPDSPTQRVGSAALSAFTQVRHEMPMLSLGNAFEENDMLEFDRRVTEGLDLPAGDLFGAGSKVQYSCEPKLDGLAVSLLYRDGALVRGATRGDGTTGEDISVNVRTVRNIPLKLKGKGWPDVLEVRGEVFMSKAGFERLNASQLEIGGKTFANPRNAAAGSLRQLDSKITANRPLEFCCYGLGQTSAEIADTHIGVLETLKKWGMPVSHELKLANGVEECLDYYRDIGERRLTLSYEIDGVVFKVNNLAAQRELGFRAREPRWAIAHKFPAMEELTELLDVEFQVGRTGAVTPVARLKPVKVAGVMVANATLHNMDEVARLGLMIGDTVIIRRAGDVIPQVVQVVAERRPENARAVQVPQTCPVCGSHVERTQLIKRSKGKETVTEGAVYRCVGRLACGAQLKQAIIHYVSRRAMDIEGLGDKTIEQLVDEKLIGSPADLYKLKYEQIIDLEGFAEISSNKLLKAIADSRQPTLARFIYALGIPDVGEETAKVLARSLASLDRVKQALPEVLTYLPDVGLEVAYEIHSFFEDEHNRNVIDALLGECGLQLQDQGELGAEFAASTTLEGLIDKLHIPSVGPGAAQKLADRFGTLEAIISADWLDMRQTLPEKQAKSVRDFFDDSAHAERARAIEAQLKDFGMHWRSEKKTVEGLPLAGQTWVLTGSLERMSRDVAKEKLESLGAKVSGSVSAKTHTVVAGPGAGSKLTKANELGLTVLDEDALLKRLTELGVAVD.

NAD(+) contacts are provided by residues D32 to D36, S81 to L82, and E121. K123 serves as the catalytic N6-AMP-lysine intermediate. 4 residues coordinate NAD(+): R144, E181, K297, and K321. Residues C415, C418, C445, and C451 each contribute to the Zn(2+) site. The BRCT domain maps to V703–D787.

This sequence belongs to the NAD-dependent DNA ligase family. LigA subfamily. Requires Mg(2+) as cofactor. It depends on Mn(2+) as a cofactor.

The enzyme catalyses NAD(+) + (deoxyribonucleotide)n-3'-hydroxyl + 5'-phospho-(deoxyribonucleotide)m = (deoxyribonucleotide)n+m + AMP + beta-nicotinamide D-nucleotide.. Functionally, DNA ligase that catalyzes the formation of phosphodiester linkages between 5'-phosphoryl and 3'-hydroxyl groups in double-stranded DNA using NAD as a coenzyme and as the energy source for the reaction. It is essential for DNA replication and repair of damaged DNA. The sequence is that of DNA ligase from Pseudomonas savastanoi pv. phaseolicola (strain 1448A / Race 6) (Pseudomonas syringae pv. phaseolicola (strain 1448A / Race 6)).